A 260-amino-acid polypeptide reads, in one-letter code: Trans-aconitate 2-methyltransferase (260 aa).

It belongs to the methyltransferase superfamily. Tam family.

Its subcellular location is the cytoplasm. The enzyme catalyses trans-aconitate + S-adenosyl-L-methionine = (E)-3-(methoxycarbonyl)pent-2-enedioate + S-adenosyl-L-homocysteine. Catalyzes the S-adenosylmethionine monomethyl esterification of trans-aconitate. This chain is Trans-aconitate 2-methyltransferase, found in Methylobacterium radiotolerans (strain ATCC 27329 / DSM 1819 / JCM 2831 / NBRC 15690 / NCIMB 10815 / 0-1).